The primary structure comprises 117 residues: G antigen 1 (117 aa).

The interval 1 to 117 (MSWRGRSTYY…PEEGEGQSQC (117 aa)) is disordered. Acidic residues-rich tracts occupy residues 32–45 (FSDE…EEGE) and 87–96 (ECEDGPDGQE).

This sequence belongs to the GAGE family. Expressed in a variety of tumor tissues but not in normal tissues, except testis.

Antigen, recognized on melanoma by autologous cytolytic T-lymphocytes. The sequence is that of G antigen 1 from Homo sapiens (Human).